Reading from the N-terminus, the 332-residue chain is MEPFKHPIAILGAGSWGTALALVLARKGQKVRLWSYESDHVDEMQAEGVNNRYLPNYPFPETLKAYCDLKASLEGVTDILIVVPSFAFHEVITRMKPLIDAKTRIAWGTKGLAKGSRLLHEVVATELGQVPMAVISGPSLATEVAANLPTAVSLTSNNSQFSKDLIERLHGQRFRVYKNDDMIGVELCGSVKNILAIATGISDGLKLGSNARAALITRGLTEMGRLVSVFGGKQETLTGLAGLGDLVLTCTDNQSRNRRFGLALGEGVDKKEAQQTIGQAIEGLYNTDQVHALAQKHAIEMPLTFQVHRILHEDLDPQQAVQELLERSPKAE.

Ser15, Trp16, and Lys110 together coordinate NADPH. Residues Lys110, Gly137, and Ser139 each coordinate sn-glycerol 3-phosphate. Ala141 is an NADPH binding site. The sn-glycerol 3-phosphate site is built by Lys192, Asp245, Ser255, Arg256, and Asn257. Lys192 acts as the Proton acceptor in catalysis. Arg256 is a binding site for NADPH. Glu282 provides a ligand contact to NADPH.

The protein belongs to the NAD-dependent glycerol-3-phosphate dehydrogenase family.

Its subcellular location is the cytoplasm. The catalysed reaction is sn-glycerol 3-phosphate + NAD(+) = dihydroxyacetone phosphate + NADH + H(+). It carries out the reaction sn-glycerol 3-phosphate + NADP(+) = dihydroxyacetone phosphate + NADPH + H(+). The protein operates within membrane lipid metabolism; glycerophospholipid metabolism. Catalyzes the reduction of the glycolytic intermediate dihydroxyacetone phosphate (DHAP) to sn-glycerol 3-phosphate (G3P), the key precursor for phospholipid synthesis. This chain is Glycerol-3-phosphate dehydrogenase [NAD(P)+], found in Coxiella burnetii (strain CbuK_Q154) (Coxiella burnetii (strain Q154)).